Consider the following 78-residue polypeptide: Large ribosomal subunit protein uL29 (78 aa).

It belongs to the universal ribosomal protein uL29 family.

This is Large ribosomal subunit protein uL29 from Rhodococcus opacus (strain B4).